The chain runs to 321 residues: uncharacterized protein (321 aa).

The protein belongs to the carbohydrate kinase PfkB family.

This is an uncharacterized protein from Escherichia coli (strain K12).